The sequence spans 392 residues: Carbamoyl phosphate synthase small chain (392 aa).

A CPSase region spans residues 1 to 174 (MSKKALLALE…EVIVENPEGD (174 aa)). L-glutamine-binding residues include serine 47, glycine 224, and glycine 226. The Glutamine amidotransferase type-1 domain occupies 176-392 (SVVVLDSGVK…EFKRLIKEVR (217 aa)). The active-site Nucleophile is cysteine 252. L-glutamine is bound by residues leucine 253, glutamine 256, asparagine 294, glycine 296, and phenylalanine 297. Residues histidine 367 and glutamate 369 contribute to the active site.

Belongs to the CarA family. Composed of two chains; the small (or glutamine) chain promotes the hydrolysis of glutamine to ammonia, which is used by the large (or ammonia) chain to synthesize carbamoyl phosphate. Tetramer of heterodimers (alpha,beta)4.

The enzyme catalyses hydrogencarbonate + L-glutamine + 2 ATP + H2O = carbamoyl phosphate + L-glutamate + 2 ADP + phosphate + 2 H(+). The catalysed reaction is L-glutamine + H2O = L-glutamate + NH4(+). It participates in amino-acid biosynthesis; L-arginine biosynthesis; carbamoyl phosphate from bicarbonate: step 1/1. It functions in the pathway pyrimidine metabolism; UMP biosynthesis via de novo pathway; (S)-dihydroorotate from bicarbonate: step 1/3. Its function is as follows. Small subunit of the glutamine-dependent carbamoyl phosphate synthetase (CPSase). CPSase catalyzes the formation of carbamoyl phosphate from the ammonia moiety of glutamine, carbonate, and phosphate donated by ATP, constituting the first step of 2 biosynthetic pathways, one leading to arginine and/or urea and the other to pyrimidine nucleotides. The small subunit (glutamine amidotransferase) binds and cleaves glutamine to supply the large subunit with the substrate ammonia. This Thermotoga maritima (strain ATCC 43589 / DSM 3109 / JCM 10099 / NBRC 100826 / MSB8) protein is Carbamoyl phosphate synthase small chain.